The sequence spans 266 residues: Na(+)-translocating NADH-quinone reductase subunit C (266 aa).

Residues 16–36 (LLVVVILCLVCSVVVAGAAVG) traverse the membrane as a helical segment. Threonine 232 is modified (FMN phosphoryl threonine).

This sequence belongs to the NqrC family. Composed of six subunits; NqrA, NqrB, NqrC, NqrD, NqrE and NqrF. The cofactor is FMN.

The protein localises to the cell inner membrane. The catalysed reaction is a ubiquinone + n Na(+)(in) + NADH + H(+) = a ubiquinol + n Na(+)(out) + NAD(+). In terms of biological role, NQR complex catalyzes the reduction of ubiquinone-1 to ubiquinol by two successive reactions, coupled with the transport of Na(+) ions from the cytoplasm to the periplasm. NqrA to NqrE are probably involved in the second step, the conversion of ubisemiquinone to ubiquinol. The polypeptide is Na(+)-translocating NADH-quinone reductase subunit C (Yersinia pestis).